Here is a 478-residue protein sequence, read N- to C-terminus: Oxidative stress-induced growth inhibitor 1 (478 aa).

Ser12 is subject to Phosphoserine.

It belongs to the OKL38 family. The cofactor is NADPH.

It is found in the midbody. Monooxygenase catalytic activity. Involved in regulation of cytokinesis; promotes RHOA activity, probably acting locally at the midbody in late cytokinesis. Monooxygenase activity is involved in stabilizing transient structures between daughter cells, termed intercellular bridges, before abscission. Regulates differentiation and proliferation through the regulation of cell death. This Mus musculus (Mouse) protein is Oxidative stress-induced growth inhibitor 1.